Reading from the N-terminus, the 1131-residue chain is Activity-dependent neuroprotector homeobox protein 2 (1131 aa).

The C2H2-type 1 zinc-finger motif lies at 73-96 (YCCGLCKYSTKVLTSFKNHLHRYH). A C2H2-type 2; degenerate zinc finger spans residues 106–128 (IPCPNCVFASQPKVVGRHFRMFH). Glycyl lysine isopeptide (Lys-Gly) (interchain with G-Cter in SUMO2) cross-links involve residues lysine 118 and lysine 146. The C2H2-type 3; degenerate zinc finger occupies 155–178 (FTCLKCNFSNTLYYSMKKHVLVAH). The C2H2-type 4 zinc-finger motif lies at 215 to 240 (YYCKKCNANASSQDALMYHILTSDIH). Low complexity predominate over residues 274 to 285 (LAAPANGSAPSA). The segment at 274–329 (LAAPANGSAPSAPAQPPCFHLALPQNSPSPAAGQPVTVAQGAPGSLTHSPPAAGQS) is disordered. The C2H2-type 5; degenerate zinc-finger motif lies at 694–716 (KTCPVCNELFPSNVYQVHMEVAH). The segment at 747 to 768 (VRCLSCKCLVSEEELIHHLLMH) adopts a C2H2-type 6; degenerate zinc-finger fold. C2H2-type zinc fingers lie at residues 770-793 (LGCL…RNRH) and 875-898 (STCP…KERH). The C2H2-type 9; degenerate zinc-finger motif lies at 913-937 (FKCIHCCGVYTGNMTLAAIAVHLVR). Glycyl lysine isopeptide (Lys-Gly) (interchain with G-Cter in SUMO2) cross-links involve residues lysine 979 and lysine 1018. Serine 1024 is subject to Phosphoserine. Residue lysine 1032 forms a Glycyl lysine isopeptide (Lys-Gly) (interchain with G-Cter in SUMO1); alternate linkage. Lysine 1032 participates in a covalent cross-link: Glycyl lysine isopeptide (Lys-Gly) (interchain with G-Cter in SUMO2); alternate. Positions 1043 to 1102 (PKKYEGRSYEEKKQFLKDYFHKKPYPSKKEIELLSSLFWVWKIDVASFFGKRRYICMKAI) form a DNA-binding region, homeobox.

This sequence belongs to the krueppel C2H2-type zinc-finger protein family. May interact with SMARCA4/BRG1.

It is found in the nucleus. Functionally, may be involved in transcriptional regulation. May play a role in neuronal function; perhaps involved in protection of brain tissues from oxidative stress. May be involved in erythroid differentiation. The chain is Activity-dependent neuroprotector homeobox protein 2 (ADNP2) from Homo sapiens (Human).